The following is a 255-amino-acid chain: Proteasome subunit alpha type-3 (255 aa).

S2 carries the N-acetylserine modification. Residues K57, K206, and K230 each carry the N6-acetyllysine modification. Phosphoserine occurs at positions 243 and 250.

Belongs to the peptidase T1A family. In terms of assembly, the 26S proteasome consists of a 20S proteasome core and two 19S regulatory subunits. The 20S proteasome core is a barrel-shaped complex made of 28 subunits that are arranged in four stacked rings. The two outer rings are each formed by seven alpha subunits, and the two inner rings are formed by seven beta subunits. The proteolytic activity is exerted by three beta-subunits PSMB5, PSMB6 and PSMB7. Interacts with AURKB. Interacts with CDKN1A. Interacts with MDM2 and RB1. Interacts with the C-terminus of TBXA2R isoform 2. Interacts with DNAJB2. (Microbial infection) Interacts with HIV-1 Tat protein. As to quaternary structure, (Microbial infection) Interacts with hepatitis C virus (HCV) F protein. In terms of assembly, (Microbial infection) Interacts with Epstein-Barr virus EBNA3 proteins.

The protein localises to the cytoplasm. It is found in the nucleus. Its function is as follows. Component of the 20S core proteasome complex involved in the proteolytic degradation of most intracellular proteins. This complex plays numerous essential roles within the cell by associating with different regulatory particles. Associated with two 19S regulatory particles, forms the 26S proteasome and thus participates in the ATP-dependent degradation of ubiquitinated proteins. The 26S proteasome plays a key role in the maintenance of protein homeostasis by removing misfolded or damaged proteins that could impair cellular functions, and by removing proteins whose functions are no longer required. Associated with the PA200 or PA28, the 20S proteasome mediates ubiquitin-independent protein degradation. This type of proteolysis is required in several pathways including spermatogenesis (20S-PA200 complex) or generation of a subset of MHC class I-presented antigenic peptides (20S-PA28 complex). Binds to the C-terminus of CDKN1A and thereby mediates its degradation. Negatively regulates the membrane trafficking of the cell-surface thromboxane A2 receptor (TBXA2R) isoform 2. This Homo sapiens (Human) protein is Proteasome subunit alpha type-3.